Here is a 490-residue protein sequence, read N- to C-terminus: ATP synthase subunit beta, plastid (490 aa).

Residue 170-177 (GGAGVGKT) participates in ATP binding.

Belongs to the ATPase alpha/beta chains family. F-type ATPases have 2 components, CF(1) - the catalytic core - and CF(0) - the membrane proton channel. CF(1) has five subunits: alpha(3), beta(3), gamma(1), delta(1), epsilon(1). CF(0) has four main subunits: a(1), b(1), b'(1) and c(9-12).

Its subcellular location is the plastid thylakoid membrane. The catalysed reaction is ATP + H2O + 4 H(+)(in) = ADP + phosphate + 5 H(+)(out). In terms of biological role, produces ATP from ADP in the presence of a proton gradient across the membrane. The catalytic sites are hosted primarily by the beta subunits. The polypeptide is ATP synthase subunit beta, plastid (Cuscuta reflexa (Southern Asian dodder)).